A 572-amino-acid polypeptide reads, in one-letter code: Putative acyl-CoA synthetase CCNA_01223 (572 aa).

Belongs to the ATP-dependent AMP-binding enzyme family.

It functions in the pathway lipid metabolism; sphingolipid metabolism. Functionally, involved in de novo bacterial ceramide synthesis. The sequence is that of Putative acyl-CoA synthetase CCNA_01223 from Caulobacter vibrioides (strain NA1000 / CB15N) (Caulobacter crescentus).